The following is a 353-amino-acid chain: Ion-translocating oxidoreductase complex subunit D (353 aa).

The next 3 helical transmembrane spans lie at L20–F39, P68–C88, and V129–V149. T187 is subject to FMN phosphoryl threonine. The next 4 membrane-spanning stretches (helical) occupy residues L215 to S235, A238 to G258, A267 to T287, and I300 to P320.

This sequence belongs to the NqrB/RnfD family. As to quaternary structure, the complex is composed of six subunits: RnfA, RnfB, RnfC, RnfD, RnfE and RnfG. The cofactor is FMN.

It is found in the cell inner membrane. Part of a membrane-bound complex that couples electron transfer with translocation of ions across the membrane. The polypeptide is Ion-translocating oxidoreductase complex subunit D (Colwellia psychrerythraea (strain 34H / ATCC BAA-681) (Vibrio psychroerythus)).